Reading from the N-terminus, the 236-residue chain is Ribose-5-phosphate isomerase A (236 aa).

Residues 28–31 (TGST), 83–86 (DGAD), and 96–99 (KGGG) each bind substrate. Glu105 functions as the Proton acceptor in the catalytic mechanism. A substrate-binding site is contributed by Lys123.

This sequence belongs to the ribose 5-phosphate isomerase family. As to quaternary structure, homodimer.

It catalyses the reaction aldehydo-D-ribose 5-phosphate = D-ribulose 5-phosphate. The protein operates within carbohydrate degradation; pentose phosphate pathway; D-ribose 5-phosphate from D-ribulose 5-phosphate (non-oxidative stage): step 1/1. Functionally, catalyzes the reversible conversion of ribose-5-phosphate to ribulose 5-phosphate. The sequence is that of Ribose-5-phosphate isomerase A from Afipia carboxidovorans (strain ATCC 49405 / DSM 1227 / KCTC 32145 / OM5) (Oligotropha carboxidovorans).